The primary structure comprises 80 residues: MTVDEVKGQVYDIIVTKMGVGKEQIKDDSKFTDDLGADSLDTVELIMEFENKFGIQIPDEDAEKISNVQDAINYIVEKKK.

One can recognise a Carrier domain in the interval 4-79; sequence DEVKGQVYDI…DAINYIVEKK (76 aa). An O-(pantetheine 4'-phosphoryl)serine modification is found at S39.

Belongs to the acyl carrier protein (ACP) family. In terms of processing, 4'-phosphopantetheine is transferred from CoA to a specific serine of apo-ACP by AcpS. This modification is essential for activity because fatty acids are bound in thioester linkage to the sulfhydryl of the prosthetic group.

It is found in the cytoplasm. It participates in lipid metabolism; fatty acid biosynthesis. Its function is as follows. Carrier of the growing fatty acid chain in fatty acid biosynthesis. In Chloroherpeton thalassium (strain ATCC 35110 / GB-78), this protein is Acyl carrier protein.